The sequence spans 804 residues: MTSFQSTLDDDEDGIAEELAASQREISVAEFFEKNKHMLGFDSGARGLVTAVKEAVDNALDATEEAGILPDIYVEISEGRDYYTLIVEDNGPGITNAQIPKIFGKLLYGSRFHAREQSRGQQGIGISAAVLYSQLTSGKPVRIESRTQDSETANVYELIIDTDTNEPEISAETEVSAAKSDLRGTHGTRIEMALDANMRARGQLHDYIKHTAVVNPHARIELQEPGGELKSERAEEASLPAETDEILPHPHGVELGTLIKMLAETDSHSVSGFLQSEFTRVGSKTATGIIDAFRDEHFGREMRWRPPADADLEATVADAVANKDATHTAVFARTVADAVRDADSIAPAELGALVADAAADAQDDTGTSFGETVQANVVAAVRDALTSDRVADVLGPVDEATTVQKDDATVRGLAERIAAKFESGGDTDRVTRDTLDEYVFRAAENTAEYADATIGETARENVADALWARMATVPDDPPNTSALADDRDAASDLLAAMASVNVMAPPTSCLSPIEADQLEAGLRTEFDADFYAAATRDADVHGGDPFIVEAGIAYGGDIDSEGGVQLMRFANRVPLVYQRGACATTDVLGDIGWRNYNLSQPGGSGLPQGPAVIMVHVASTNVPFTSESKDAIANVPEIEAEIELAVREAARELKSFLQKRQSMRKRQQKQDVIMDILPTMAEKVGELTGRGGVDVSDSLARIMNNVLVERARSDDGQTVTLRVENHGTGSVDVDVTDIVSAEPDGVGDDASVVAMDDEYFVKWTPAVAGDDAAELTYSVDADADCELSVSGVADARLTVSEADT.

Residues Asn-58, Asp-89, 110–111, 120–127, and Lys-629 each bind ATP; these read SR and GQQGIGIS.

This sequence belongs to the TOP6B family. Homodimer. Heterotetramer of two Top6A and two Top6B chains.

It catalyses the reaction ATP-dependent breakage, passage and rejoining of double-stranded DNA.. In terms of biological role, relaxes both positive and negative superturns and exhibits a strong decatenase activity. In Halobacterium salinarum (strain ATCC 29341 / DSM 671 / R1), this protein is Type 2 DNA topoisomerase 6 subunit B.